We begin with the raw amino-acid sequence, 1056 residues long: Carbamoyl phosphate synthase large chain (1056 aa).

The carboxyphosphate synthetic domain stretch occupies residues Met1–Asp397. ATP is bound by residues Arg127, Arg167, Gly173, Gly174, Glu206, Val208, Glu213, Gly239, Val240, His241, Gln282, and Glu294. Residues Lys131–Ile323 form the ATP-grasp 1 domain. Mg(2+)-binding residues include Gln282, Glu294, and Asn296. Mn(2+)-binding residues include Gln282, Glu294, and Asn296. An oligomerization domain region spans residues Thr398–Ile530. A carbamoyl phosphate synthetic domain region spans residues Ile531–Glu919. An ATP-grasp 2 domain is found at Ser661–Ile852. ATP is bound by residues Arg697, Ser736, Leu738, Glu743, Gly768, Val769, His770, Ser771, Gln811, and Glu823. Residues Gln811, Glu823, and Asn825 each coordinate Mg(2+). The Mn(2+) site is built by Gln811, Glu823, and Asn825. The MGS-like domain maps to Asn918–Glu1056. Residues Leu920–Glu1056 form an allosteric domain region.

It belongs to the CarB family. In terms of assembly, composed of two chains; the small (or glutamine) chain promotes the hydrolysis of glutamine to ammonia, which is used by the large (or ammonia) chain to synthesize carbamoyl phosphate. Tetramer of heterodimers (alpha,beta)4. Requires Mg(2+) as cofactor. It depends on Mn(2+) as a cofactor.

It catalyses the reaction hydrogencarbonate + L-glutamine + 2 ATP + H2O = carbamoyl phosphate + L-glutamate + 2 ADP + phosphate + 2 H(+). The enzyme catalyses hydrogencarbonate + NH4(+) + 2 ATP = carbamoyl phosphate + 2 ADP + phosphate + 2 H(+). Its pathway is amino-acid biosynthesis; L-arginine biosynthesis; carbamoyl phosphate from bicarbonate: step 1/1. It participates in pyrimidine metabolism; UMP biosynthesis via de novo pathway; (S)-dihydroorotate from bicarbonate: step 1/3. In terms of biological role, large subunit of the glutamine-dependent carbamoyl phosphate synthetase (CPSase). CPSase catalyzes the formation of carbamoyl phosphate from the ammonia moiety of glutamine, carbonate, and phosphate donated by ATP, constituting the first step of 2 biosynthetic pathways, one leading to arginine and/or urea and the other to pyrimidine nucleotides. The large subunit (synthetase) binds the substrates ammonia (free or transferred from glutamine from the small subunit), hydrogencarbonate and ATP and carries out an ATP-coupled ligase reaction, activating hydrogencarbonate by forming carboxy phosphate which reacts with ammonia to form carbamoyl phosphate. In Methanosphaerula palustris (strain ATCC BAA-1556 / DSM 19958 / E1-9c), this protein is Carbamoyl phosphate synthase large chain.